The primary structure comprises 568 residues: MNTEVLGVIAQIVLMVVLSYPLGKYIAKVYKGEKTWSDFMKPVERVMFKLSGINPNEEMNWKQFLRALLVVNLFWFLWGMVLLVTQGVLPLNPDGNVGQTAHQAFNTCISFMVNCNLQHYSGESGLTYFTQLFVIMLFQFITAATGMAAMAGIMKALAAKTTQTIGNFWNYLVLSCTRVLLPLSLVVGFILIVQGTPMGFDGKMKVTTMEGATQYVSQGPTAAIVPIKQLGTNGGGYFGVNSSHPLENPTYFANMVECWSILIIPMAMAFAFGFYLKRKKLGYSIYGVMLFAYLVGVCINVSQEMGGNPRIDEMGIAQDNGAMEGKEIRLGSAATALWSITTTVTSNGSVNGMHDSTMPLSGMMEMLNMQINTWFGGVGVGWMNYFTFIIIAVFISGLMVGRTPEFLGHKVEAREMKIASIVALLHPFIILVGTALAAYLFVHAPAFVESEGGWLNNPGYHGLSEMLYEYTSCAANNGSGFEGLGDNTWFWNYSCGIVLILGRFVPIVGQVAIAGILAKKKFIPESAGTLQTDTVTFGVMTFAVIFIVAALSFFPVHALSTIAEHLSL.

10 helical membrane passes run 3-23 (TEVL…YPLG), 68-88 (LLVV…TQGV), 133-153 (FVIM…MAGI), 180-200 (LLPL…PMGF), 256-276 (VECW…GFYL), 281-301 (LGYS…CINV), 375-395 (FGGV…AVFI), 421-441 (IVAL…AYLF), 497-517 (IVLI…AGIL), and 535-555 (VTFG…SFFP).

This sequence belongs to the KdpA family. The system is composed of three essential subunits: KdpA, KdpB and KdpC.

It is found in the cell inner membrane. Part of the high-affinity ATP-driven potassium transport (or Kdp) system, which catalyzes the hydrolysis of ATP coupled with the electrogenic transport of potassium into the cytoplasm. This subunit binds the periplasmic potassium ions and delivers the ions to the membrane domain of KdpB through an intramembrane tunnel. In Phocaeicola vulgatus (strain ATCC 8482 / DSM 1447 / JCM 5826 / CCUG 4940 / NBRC 14291 / NCTC 11154) (Bacteroides vulgatus), this protein is Potassium-transporting ATPase potassium-binding subunit.